Reading from the N-terminus, the 195-residue chain is Thioredoxin reductase-like selenoprotein T (195 aa).

A signal peptide spans M1–A19. The cysteinyl-selenocysteine (Cys-Sec) cross-link spans C46 to U49. Position 49 (U49) is a non-standard amino acid, selenocysteine. A helical membrane pass occupies residues I85–G103.

Belongs to the SelWTH family. Selenoprotein T subfamily. In terms of processing, may contain a selenide-sulfide bond between Cys-46 and Sec-49. This bond is speculated to serve as redox-active pair. Ubiquitous. Highly expressed in the endocrine pancreas.

It localises to the endoplasmic reticulum membrane. The catalysed reaction is [thioredoxin]-dithiol + NADP(+) = [thioredoxin]-disulfide + NADPH + H(+). Its function is as follows. Selenoprotein with thioredoxin reductase-like oxidoreductase activity. Protects dopaminergic neurons against oxidative stress and cell death. Involved in ADCYAP1/PACAP-induced calcium mobilization and neuroendocrine secretion. Plays a role in fibroblast anchorage and redox regulation. In gastric smooth muscle, modulates the contraction processes through the regulation of calcium release and MYLK activation. In pancreatic islets, involved in the control of glucose homeostasis, contributes to prolonged ADCYAP1/PACAP-induced insulin secretion. The protein is Thioredoxin reductase-like selenoprotein T of Homo sapiens (Human).